Here is a 307-residue protein sequence, read N- to C-terminus: MELLFLGTGAGIPAKTRNVTSVALKLLEERRSVWLFDCGEATQHQILHTSIKPRKIEKIFITHLHGDHVYGLPGLVSSRSFQGGEGPLTVYGPQGIKTFLETALDVSGTHVTYPLVIKEIGEGTVFEDDQFIVTARSVSHGIPAFGYRVQEKDVPGALDAEALKEIGVSPGPVYQKLKNGETVTLEDGRTIHGADFIGPPKKGRIVAFSGDTRPCENVKRLAEKADVLIHEATFAKGDRELAGDYYHSTSEQAAETAREACAKKLILTHISARYQGENVLELVDEAKAIFPDTVAAFDFYEHEIKRT.

Positions 63, 65, 67, 68, 140, 211, and 269 each coordinate Zn(2+). Residue Asp67 is the Proton acceptor of the active site.

It belongs to the RNase Z family. As to quaternary structure, homodimer. The cofactor is Zn(2+).

The enzyme catalyses Endonucleolytic cleavage of RNA, removing extra 3' nucleotides from tRNA precursor, generating 3' termini of tRNAs. A 3'-hydroxy group is left at the tRNA terminus and a 5'-phosphoryl group is left at the trailer molecule.. In terms of biological role, zinc phosphodiesterase, which displays some tRNA 3'-processing endonuclease activity. Probably involved in tRNA maturation, by removing a 3'-trailer from precursor tRNA. This Bacillus licheniformis (strain ATCC 14580 / DSM 13 / JCM 2505 / CCUG 7422 / NBRC 12200 / NCIMB 9375 / NCTC 10341 / NRRL NRS-1264 / Gibson 46) protein is Ribonuclease Z.